The following is a 314-amino-acid chain: MAVASTSLASQLSGPKSLSQPYSGLRRSCPKLDQSHSSLFQHLSLSSSSRKASRAVVAMAGTGKFFVGGNWKCNGTKDLISKLVSDLNSAKLEPDVDVVVAPPFLYLDQVKSSLTDRIEISGQNSWVAKGGAFTGEISVEQLKDIGRKWVILGHSERRHVIGEDDQFIGKKAAYALNEGLGVIACIGEKLEEREAGKTFDVCYEQLKAFADAVPSWENIVVAYEPVWAIGTGKVASPQQAQEVHVAVREWLKKNVSAEVASKTRIIYGGSVNGGNSAELAKEEDIDGFLVGGASLKGPEFATIVNAVTSKKVAA.

The span at Met1 to Tyr22 shows a compositional bias: polar residues. The disordered stretch occupies residues Met1–Leu25. The N-terminal 59 residues, Met1–Met59, are a transit peptide targeting the chloroplast. Residues Asn70 and Lys72 each coordinate substrate. His154 serves as the catalytic Electrophile. The active-site Proton acceptor is Glu224.

This sequence belongs to the triosephosphate isomerase family. As to quaternary structure, homodimer.

It is found in the plastid. The protein localises to the chloroplast. It carries out the reaction D-glyceraldehyde 3-phosphate = dihydroxyacetone phosphate. The protein operates within carbohydrate biosynthesis; Calvin cycle. This Fragaria ananassa (Strawberry) protein is Triosephosphate isomerase, chloroplastic (TPI).